We begin with the raw amino-acid sequence, 912 residues long: DNA (cytosine-5)-methyltransferase 3A (912 aa).

Disordered stretches follow at residues 1-178 (MPAM…GWES) and 221-286 (IAGM…EYED). The span at 17–40 (AEREEDRKDGEEQEEPRGKEERQE) shows a compositional bias: basic and acidic residues. The span at 47–57 (KVGRPGRKRKH) shows a compositional bias: basic residues. A compositionally biased stretch (polar residues) spans 74-83 (KSPSMAQDSG). Residue serine 105 is modified to Phosphoserine. Positions 113–128 (GAPAEGEGAAETLPEA) are enriched in low complexity. Position 124 is a phosphothreonine (threonine 124). A compositionally biased stretch (basic and acidic residues) spans 149–167 (AGKEQKETNIESMKMEGSR). Lysine 162 participates in a covalent cross-link: Glycyl lysine isopeptide (Lys-Gly) (interchain with G-Cter in SUMO2). Arginine 171 carries the post-translational modification Omega-N-methylarginine. An interaction with DNMT1 and DNMT3B region spans residues 199–403 (SKRKRDEWLA…DTAKAVEVQN (205 aa)). Phosphoserine occurs at positions 243 and 255. Residues 246-260 (AVQQPTDPASPTVAT) show a composition bias toward polar residues. Threonine 261 bears the Phosphothreonine mark. The residue at position 267 (serine 267) is a Phosphoserine. Residues 269–279 (AGDKNATKAGD) show a composition bias toward basic and acidic residues. Residues 292–350 (IGELVWGKLRGFSWWPGRIVSWWMTGRSRAAEGTRWVMWFGDGKFSVVCVEKLMPLSSF) form the PWWP domain. A phosphoserine mark is found at serine 390 and serine 393. The disordered stretch occupies residues 447–466 (AYAPPPPAKKPRKSTAEKPK). The 133-residue stretch at 482 to 614 (EVRQKCRNIE…LQMFFANNHD (133 aa)) folds into the ADD domain. The GATA-type; atypical zinc-finger motif lies at 493–523 (ICISCGSLNVTLEHPLFVGGMCQNCKNCFLE). Residues 494–586 (CISCGSLNVT…KEDPWNCYMC (93 aa)) are interaction with the PRC2/EED-EZH2 complex. The segment at 534 to 590 (QSYCTICCGGREVLMCGNNNCCRCFCVECVDLLVGPGAAQAAIKEDPWNCYMCGHKG) adopts a PHD-type; atypical zinc-finger fold. Residues 634 to 912 (IRVLSLFDGI…APLKEYFACV (279 aa)) form the SAM-dependent MTase C5-type domain. S-adenosyl-L-methionine contacts are provided by residues 641–645 (DGIAT), glutamate 664, and 686–688 (DVR). The active site involves cysteine 710. Cysteine 710 carries the post-translational modification S-methylcysteine; by autocatalysis. 891-893 (RSW) is a binding site for S-adenosyl-L-methionine.

It belongs to the class I-like SAM-binding methyltransferase superfamily. C5-methyltransferase family. Heterotetramer composed of 1 DNMT3A homodimer and 2 DNMT3L subunits (DNMT3L-DNMT3A-DNMT3A-DNMT3L). Interacts with UBC9, PIAS1 and PIAS2. Binds the ZBTB18 transcriptional repressor. Interacts with SETDB1. Associates with HDAC1 through its ADD domain. Interacts with UHRF1. Interacts with DNMT1 and DNMT3B. Interacts with the PRC2/EED-EZH2 complex. Interacts with MPHOSPH8. Interacts with histone H3 that is not methylated at 'Lys-4' (H3K4). Interacts with SPOCD1. Interacts with ZNF263; recruited to the SIX3 promoter along with other proteins involved in chromatin modification and transcriptional corepression where it contributes to transcriptional repression. Sumoylated; sumoylation disrupts the ability to interact with histone deacetylases (HDAC1 and HDAC2) and repress transcription. Post-translationally, auto-methylated at Cys-710: auto-methylation takes place in absence of DNA substrate and inactivates the DNA methyltransferase activity. Inactivation by auto-methylation may be used to inactivate unused DNA methyltransferases in the cell. Highly expressed in fetal tissues, skeletal muscle, heart, peripheral blood mononuclear cells, kidney, and at lower levels in placenta, brain, liver, colon, spleen, small intestine and lung.

It is found in the nucleus. Its subcellular location is the chromosome. The protein resides in the cytoplasm. It carries out the reaction a 2'-deoxycytidine in DNA + S-adenosyl-L-methionine = a 5-methyl-2'-deoxycytidine in DNA + S-adenosyl-L-homocysteine + H(+). The enzyme catalyses L-cysteinyl-[protein] + S-adenosyl-L-methionine = S-methyl-L-cysteinyl-[protein] + S-adenosyl-L-homocysteine + H(+). Its activity is regulated as follows. Activated by binding to the regulatory factor DNMT3L. Auto-methylation at Cys-710 in absence of DNA inactivates the DNA methyltransferase activity. Required for genome-wide de novo methylation and is essential for the establishment of DNA methylation patterns during development. DNA methylation is coordinated with methylation of histones. It modifies DNA in a non-processive manner and also methylates non-CpG sites. May preferentially methylate DNA linker between 2 nucleosomal cores and is inhibited by histone H1. Plays a role in paternal and maternal imprinting. Required for methylation of most imprinted loci in germ cells. Acts as a transcriptional corepressor for ZBTB18. Recruited to trimethylated 'Lys-36' of histone H3 (H3K36me3) sites. Can actively repress transcription through the recruitment of HDAC activity. Also has weak auto-methylation activity on Cys-710 in absence of DNA. This is DNA (cytosine-5)-methyltransferase 3A (DNMT3A) from Homo sapiens (Human).